A 684-amino-acid chain; its full sequence is Glycine--tRNA ligase beta subunit (684 aa).

The protein belongs to the class-II aminoacyl-tRNA synthetase family. Tetramer of two alpha and two beta subunits.

The protein localises to the cytoplasm. The catalysed reaction is tRNA(Gly) + glycine + ATP = glycyl-tRNA(Gly) + AMP + diphosphate. The protein is Glycine--tRNA ligase beta subunit of Pseudomonas aeruginosa (strain ATCC 15692 / DSM 22644 / CIP 104116 / JCM 14847 / LMG 12228 / 1C / PRS 101 / PAO1).